The primary structure comprises 505 residues: Pleckstrin homology domain-containing family D member 1 (505 aa).

The region spanning 28–136 (KVQLYGVLWK…WLEMLQESGK (109 aa)) is the PH domain. The stretch at 146 to 391 (EAMIKSLEAQ…KVRNKEKEER (246 aa)) forms a coiled coil. Residues 264 to 284 (DKNQPQPLTNQSEQPPASDGL) are disordered. The span at 267-278 (QPQPLTNQSEQP) shows a compositional bias: polar residues. The residue at position 502 (arginine 502) is an Omega-N-methylarginine.

It belongs to the PLEKHD1 family.

The protein is Pleckstrin homology domain-containing family D member 1 (Plekhd1) of Mus musculus (Mouse).